The sequence spans 393 residues: NAD(P)H-quinone oxidoreductase subunit H, chloroplastic (393 aa).

Belongs to the complex I 49 kDa subunit family. NDH is composed of at least 16 different subunits, 5 of which are encoded in the nucleus.

The protein resides in the plastid. It localises to the chloroplast thylakoid membrane. It catalyses the reaction a plastoquinone + NADH + (n+1) H(+)(in) = a plastoquinol + NAD(+) + n H(+)(out). The enzyme catalyses a plastoquinone + NADPH + (n+1) H(+)(in) = a plastoquinol + NADP(+) + n H(+)(out). NDH shuttles electrons from NAD(P)H:plastoquinone, via FMN and iron-sulfur (Fe-S) centers, to quinones in the photosynthetic chain and possibly in a chloroplast respiratory chain. The immediate electron acceptor for the enzyme in this species is believed to be plastoquinone. Couples the redox reaction to proton translocation, and thus conserves the redox energy in a proton gradient. The protein is NAD(P)H-quinone oxidoreductase subunit H, chloroplastic of Lolium perenne (Perennial ryegrass).